The sequence spans 35 residues: Tamulustoxin-2 (35 aa).

3 cysteine pairs are disulfide-bonded: C2/C22, C7/C31, and C11/C33.

This sequence belongs to the short scorpion toxin superfamily. Potassium channel inhibitor family. Expressed by the venom gland.

The protein resides in the secreted. In terms of biological role, blocks Kv1.6/KCNA6 potassium channels. This is Tamulustoxin-2 from Hottentotta tamulus (Eastern Indian scorpion).